A 376-amino-acid chain; its full sequence is tRNA-specific 2-thiouridylase MnmA (376 aa).

Residues 17–24 (GMSGGVDS) and Met-43 each bind ATP. The interaction with target base in tRNA stretch occupies residues 103–105 (NPD). Catalysis depends on Cys-108, which acts as the Nucleophile. Cys-108 and Cys-204 are oxidised to a cystine. An ATP-binding site is contributed by Gly-132. Residues 154 to 156 (KDQ) form an interaction with tRNA region. Cys-204 functions as the Cysteine persulfide intermediate in the catalytic mechanism. Residues 316–317 (RY) form an interaction with tRNA region.

The protein belongs to the MnmA/TRMU family.

It is found in the cytoplasm. The catalysed reaction is S-sulfanyl-L-cysteinyl-[protein] + uridine(34) in tRNA + AH2 + ATP = 2-thiouridine(34) in tRNA + L-cysteinyl-[protein] + A + AMP + diphosphate + H(+). Its function is as follows. Catalyzes the 2-thiolation of uridine at the wobble position (U34) of tRNA, leading to the formation of s(2)U34. The chain is tRNA-specific 2-thiouridylase MnmA from Pseudomonas syringae pv. syringae (strain B728a).